Reading from the N-terminus, the 795-residue chain is Lon protease (795 aa).

One can recognise a Lon N-terminal domain in the interval 7–213; the sequence is PQILVVRNQV…KIIGSGIEDL (207 aa). 379–386 is a binding site for ATP; that stretch reads GPPGVGKS. In terms of domain architecture, Lon proteolytic spans 615–795; sequence DALPGIVNGM…YKDIYNKIFN (181 aa). Active-site residues include Ser-702 and Lys-745.

Belongs to the peptidase S16 family. In terms of assembly, homohexamer. Organized in a ring with a central cavity.

It is found in the cytoplasm. It catalyses the reaction Hydrolysis of proteins in presence of ATP.. Functionally, ATP-dependent serine protease that mediates the selective degradation of mutant and abnormal proteins as well as certain short-lived regulatory proteins. Required for cellular homeostasis and for survival from DNA damage and developmental changes induced by stress. Degrades polypeptides processively to yield small peptide fragments that are 5 to 10 amino acids long. Binds to DNA in a double-stranded, site-specific manner. In Mycoplasma pneumoniae (strain ATCC 29342 / M129 / Subtype 1) (Mycoplasmoides pneumoniae), this protein is Lon protease.